The primary structure comprises 145 residues: Large ribosomal subunit protein uL13 (145 aa).

It belongs to the universal ribosomal protein uL13 family. In terms of assembly, part of the 50S ribosomal subunit.

This protein is one of the early assembly proteins of the 50S ribosomal subunit, although it is not seen to bind rRNA by itself. It is important during the early stages of 50S assembly. The protein is Large ribosomal subunit protein uL13 of Bacillus thuringiensis (strain Al Hakam).